Reading from the N-terminus, the 294-residue chain is Elongation factor Ts (294 aa).

The involved in Mg(2+) ion dislocation from EF-Tu stretch occupies residues 80 to 83; that stretch reads TDFV.

It belongs to the EF-Ts family.

The protein localises to the cytoplasm. Functionally, associates with the EF-Tu.GDP complex and induces the exchange of GDP to GTP. It remains bound to the aminoacyl-tRNA.EF-Tu.GTP complex up to the GTP hydrolysis stage on the ribosome. The protein is Elongation factor Ts of Listeria monocytogenes serotype 4b (strain CLIP80459).